The following is a 156-amino-acid chain: Small ribosomal subunit protein bS6 (156 aa).

Residues 95–156 (AITETSPLAK…DRDEQSEDSE (62 aa)) form a disordered region. A compositionally biased stretch (basic and acidic residues) spans 117–126 (RSGRDRDESG).

It belongs to the bacterial ribosomal protein bS6 family.

In terms of biological role, binds together with bS18 to 16S ribosomal RNA. This chain is Small ribosomal subunit protein bS6, found in Nitrosococcus oceani (strain ATCC 19707 / BCRC 17464 / JCM 30415 / NCIMB 11848 / C-107).